A 431-amino-acid chain; its full sequence is Na(+)-translocating NADH-quinone reductase subunit F (431 aa).

A helical transmembrane segment spans residues Ile-10 to Ile-30. The 2Fe-2S ferredoxin-type domain maps to Cys-41–Tyr-133. 4 residues coordinate [2Fe-2S] cluster: Cys-76, Cys-82, Cys-85, and Cys-117. One can recognise an FAD-binding FR-type domain in the interval Ala-136–Lys-286.

Belongs to the NqrF family. Composed of six subunits; NqrA, NqrB, NqrC, NqrD, NqrE and NqrF. It depends on [2Fe-2S] cluster as a cofactor. The cofactor is FAD.

Its subcellular location is the cell inner membrane. It carries out the reaction a ubiquinone + n Na(+)(in) + NADH + H(+) = a ubiquinol + n Na(+)(out) + NAD(+). Functionally, NQR complex catalyzes the reduction of ubiquinone-1 to ubiquinol by two successive reactions, coupled with the transport of Na(+) ions from the cytoplasm to the periplasm. The first step is catalyzed by NqrF, which accepts electrons from NADH and reduces ubiquinone-1 to ubisemiquinone by a one-electron transfer pathway. This Chlamydia felis (strain Fe/C-56) (Chlamydophila felis) protein is Na(+)-translocating NADH-quinone reductase subunit F.